The sequence spans 713 residues: Probable ATP-dependent RNA helicase DDX4 (713 aa).

The segment at 23–240 (EKDKYSSGAN…YIPPPPPEDE (218 aa)) is disordered. Polar residues predominate over residues 29–44 (SGANGDTFNRTSASSS). Residues 71–80 (DIGESSKRET) show a composition bias toward basic and acidic residues. The segment covering 85–95 (GGFGRGKGFGN) has biased composition (gly residues). The segment covering 178-190 (DSGSGDTFQSRSG) has biased composition (polar residues). A phosphoserine mark is found at Ser207 and Ser211. Residues 213-232 (KSEAEGGESSDIQGPKVTYI) form an interaction with RANBP9 region. Residues 273 to 301 (LTFEEANLCQTLNNNIAKAGYTKLTPVQK) carry the Q motif motif. The 184-residue stretch at 304–487 (IPIVLAGRDL…GEFLKSNYLF (184 aa)) folds into the Helicase ATP-binding domain. Residue 317 to 324 (AQTGSGKT) participates in ATP binding. A DEAD box motif is present at residues 431-434 (DEAD). A Helicase C-terminal domain is found at 515–660 (KLVEILRNIG…DVPAWLEEIA (146 aa)). Polar residues predominate over residues 689–703 (GKNTLNTAGISSAQA). Residues 689-713 (GKNTLNTAGISSAQAPNPVDDESWD) form a disordered region. Ser711 bears the Phosphoserine mark.

The protein belongs to the DEAD box helicase family. DDX4/VASA subfamily. Found in a mRNP complex, at least composed of TDRD1, TDRD6, TDRD7 and DDX4. Interacts with RANBP9. Interacts with RANBP10. Interacts with PIWIL2 and MAEL. Interacts with BMAL1 and CLOCK. Interacts with Tex19.1 and, probably, Tex19.2. Interacts with RBM46. Testis.

The protein resides in the cytoplasm. It localises to the perinuclear region. The enzyme catalyses ATP + H2O = ADP + phosphate + H(+). In terms of biological role, ATP-dependent RNA helicase required during spermatogenesis to repress transposable elements and preventing their mobilization, which is essential for the germline integrity. Acts via the piRNA metabolic process, which mediates the repression of transposable elements during meiosis by forming complexes composed of piRNAs and Piwi proteins and governs the methylation and subsequent repression of transposons. Involved in the secondary piRNAs metabolic process, the production of piRNAs in fetal male germ cells through a ping-pong amplification cycle. Required for PIWIL2 slicing-triggered piRNA biogenesis: helicase activity enables utilization of one of the slice cleavage fragments generated by PIWIL2 and processing these pre-piRNAs into piRNAs. The protein is Probable ATP-dependent RNA helicase DDX4 (Ddx4) of Rattus norvegicus (Rat).